The following is a 129-amino-acid chain: Small ribosomal subunit protein uS9 (129 aa).

Belongs to the universal ribosomal protein uS9 family.

This is Small ribosomal subunit protein uS9 from Helicobacter pylori (strain HPAG1).